The sequence spans 232 residues: MSISNSIRAQIPPIHPEGYPFIGAFALVSLILFWIFAPLGWIGTLLTVWCALFFRDPIRVTPQREGLVVAPADGRISMITRALPPAELGLGDRPLLRVSIFMSVFNVHVNRSPVAGRIEKIAYRPGAFINAELDKASEDNERNSLAISTPHGKIGVVQIAGLVARRIVSFVREGQTVGAGERFGLIRFGSRLDVYFPDGTEVLVSEGQTAIAGETVLADFDVAVPGLTFRSQ.

The active-site Schiff-base intermediate with substrate; via pyruvic acid is the Ser-190. The residue at position 190 (Ser-190) is a Pyruvic acid (Ser); by autocatalysis.

It belongs to the phosphatidylserine decarboxylase family. PSD-A subfamily. As to quaternary structure, heterodimer of a large membrane-associated beta subunit and a small pyruvoyl-containing alpha subunit. The cofactor is pyruvate. Post-translationally, is synthesized initially as an inactive proenzyme. Formation of the active enzyme involves a self-maturation process in which the active site pyruvoyl group is generated from an internal serine residue via an autocatalytic post-translational modification. Two non-identical subunits are generated from the proenzyme in this reaction, and the pyruvate is formed at the N-terminus of the alpha chain, which is derived from the carboxyl end of the proenzyme. The post-translation cleavage follows an unusual pathway, termed non-hydrolytic serinolysis, in which the side chain hydroxyl group of the serine supplies its oxygen atom to form the C-terminus of the beta chain, while the remainder of the serine residue undergoes an oxidative deamination to produce ammonia and the pyruvoyl prosthetic group on the alpha chain.

Its subcellular location is the cell membrane. It catalyses the reaction a 1,2-diacyl-sn-glycero-3-phospho-L-serine + H(+) = a 1,2-diacyl-sn-glycero-3-phosphoethanolamine + CO2. It participates in phospholipid metabolism; phosphatidylethanolamine biosynthesis; phosphatidylethanolamine from CDP-diacylglycerol: step 2/2. In terms of biological role, catalyzes the formation of phosphatidylethanolamine (PtdEtn) from phosphatidylserine (PtdSer). The chain is Phosphatidylserine decarboxylase proenzyme from Bradyrhizobium sp. (strain ORS 278).